The following is a 257-amino-acid chain: Nickel import system ATP-binding protein NikD (257 aa).

Positions 4 to 245 constitute an ABC transporter domain; the sequence is IDIQNLTIKN…HLHPYTERLI (242 aa). Residue 37-44 coordinates ATP; it reads GESGAGKS.

Belongs to the ABC transporter superfamily. As to quaternary structure, the complex is composed of two ATP-binding proteins (NikD and NikE), two transmembrane proteins (NikB and NikC) and a solute-binding protein (NikA).

It is found in the cell membrane. The catalysed reaction is Ni(2+)(out) + ATP + H2O = Ni(2+)(in) + ADP + phosphate + H(+). Functionally, part of the ABC transporter complex NikABCDE (Opp2) involved in nickel import. Probably responsible for energy coupling to the transport system. The sequence is that of Nickel import system ATP-binding protein NikD from Staphylococcus aureus (strain MRSA252).